Consider the following 195-residue polypeptide: Imidazoleglycerol-phosphate dehydratase (195 aa).

Belongs to the imidazoleglycerol-phosphate dehydratase family.

It localises to the cytoplasm. The enzyme catalyses D-erythro-1-(imidazol-4-yl)glycerol 3-phosphate = 3-(imidazol-4-yl)-2-oxopropyl phosphate + H2O. Its pathway is amino-acid biosynthesis; L-histidine biosynthesis; L-histidine from 5-phospho-alpha-D-ribose 1-diphosphate: step 6/9. This Aminomonas aminovorus protein is Imidazoleglycerol-phosphate dehydratase.